The sequence spans 891 residues: Probable serine/threonine-protein kinase mkcC (891 aa).

Disordered stretches follow at residues Ile-24 to Ile-70, Ala-85 to Ser-121, Asp-264 to Lys-435, Asn-495 to Ser-526, and Thr-565 to Asp-588. Positions Gln-29–Pro-41 are enriched in low complexity. The span at Glu-45–Glu-58 shows a compositional bias: basic and acidic residues. Low complexity-rich tracts occupy residues Thr-61–Ile-70, Asn-86–Asn-105, Ser-297–Lys-314, Ser-322–Ser-360, and Thr-379–Ser-397. Positions Arg-422–Ala-432 are enriched in basic residues. Low complexity predominate over residues Asn-495–Ser-522. In terms of domain architecture, Protein kinase spans Tyr-616–Ile-864. ATP-binding positions include Ile-622–Val-630 and Lys-645. The Proton acceptor role is filled by Asp-735.

This sequence belongs to the protein kinase superfamily. STE Ser/Thr protein kinase family. STE20 subfamily. It depends on Mg(2+) as a cofactor.

The enzyme catalyses L-seryl-[protein] + ATP = O-phospho-L-seryl-[protein] + ADP + H(+). It catalyses the reaction L-threonyl-[protein] + ATP = O-phospho-L-threonyl-[protein] + ADP + H(+). The protein is Probable serine/threonine-protein kinase mkcC of Dictyostelium discoideum (Social amoeba).